Here is a 591-residue protein sequence, read N- to C-terminus: Aspartate--tRNA(Asp/Asn) ligase (591 aa).

L-aspartate is bound at residue Glu-174. An aspartate region spans residues 198–201 (QLFK). Arg-220 lines the L-aspartate pocket. ATP is bound by residues 220-222 (RDE) and Gln-229. His-450 provides a ligand contact to L-aspartate. ATP is bound at residue Glu-483. Arg-490 serves as a coordination point for L-aspartate. 535 to 538 (GLDR) provides a ligand contact to ATP.

This sequence belongs to the class-II aminoacyl-tRNA synthetase family. Type 1 subfamily. As to quaternary structure, homodimer.

The protein localises to the cytoplasm. It carries out the reaction tRNA(Asx) + L-aspartate + ATP = L-aspartyl-tRNA(Asx) + AMP + diphosphate. Functionally, aspartyl-tRNA synthetase with relaxed tRNA specificity since it is able to aspartylate not only its cognate tRNA(Asp) but also tRNA(Asn). Reaction proceeds in two steps: L-aspartate is first activated by ATP to form Asp-AMP and then transferred to the acceptor end of tRNA(Asp/Asn). The chain is Aspartate--tRNA(Asp/Asn) ligase from Pseudomonas fluorescens (strain ATCC BAA-477 / NRRL B-23932 / Pf-5).